A 179-amino-acid polypeptide reads, in one-letter code: Putative cleavage and polyadenylation specificity factor subunit 4-like protein (179 aa).

5 consecutive C3H1-type zinc fingers follow at residues 35–61 (KSAS…RHDR), 62–89 (GEKM…HQYD), 90–117 (LTRM…HVKP), 118–145 (AFKS…HVPR), and 146–169 (IMCL…QKIR).

Belongs to the CPSF4/YTH1 family.

This is Putative cleavage and polyadenylation specificity factor subunit 4-like protein (CPSF4L) from Homo sapiens (Human).